Reading from the N-terminus, the 910-residue chain is Seizure 6-like protein 2 (910 aa).

The first 27 residues, M1–G27, serve as a signal peptide directing secretion. Over L28–N844 the chain is Extracellular. Positions P70–E152 are disordered. Residues L123–R145 show a composition bias toward pro residues. Cysteines 173 and 202 form a disulfide. The 114-residue stretch at C173–Y286 folds into the CUB 1 domain. N222 is a glycosylation site (N-linked (GlcNAc...) asparagine). The 60-residue stretch at L288–A347 folds into the Sushi 1 domain. 12 disulfide bridges follow: C290/C330, C316/C345, C349/C376, C464/C508, C491/C523, C527/C553, C644/C686, C672/C699, C705/C747, C733/C764, C771/C813, and C799/C828. N-linked (GlcNAc...) asparagine glycosylation is found at N332, N373, N473, and N517. Residues C349–F459 enclose the CUB 2 domain. The Sushi 2 domain occupies D462 to A525. The CUB 3 domain occupies C527 to V638. Sushi domains lie at D642–K701, M703–L766, and E769–V830. Residues L845–I865 traverse the membrane as a helical segment. Topologically, residues Y866–I910 are cytoplasmic.

This sequence belongs to the SEZ6 family. As to expression, expressed exclusively in the brain, predominantly in the neurons. Wide expression in the gray matter of the brain with high levels in the olfactory bulb, anterior olfactory nuclei, hippocampal formation and cerebellar cortex. Detected diffusely and weakly in the white matter, such as the corpus callosum and cerebellar medulla. In the cerebellar cortex, intensely expressed in Purkinje cells (PC) and granule cells. Detected also in interneurons in the molecular layer. Up-regulated at two weeks after birth.

It is found in the cell membrane. The protein resides in the endoplasmic reticulum membrane. In terms of biological role, may contribute to specialized endoplasmic reticulum functions in neurons. The polypeptide is Seizure 6-like protein 2 (Sez6l2) (Mus musculus (Mouse)).